The chain runs to 235 residues: Photosystem I assembly protein Ycf4 (235 aa).

2 consecutive transmembrane segments (helical) span residues asparagine 21–tyrosine 43 and glycine 63–leucine 85.

The protein belongs to the Ycf4 family.

The protein localises to the plastid. The protein resides in the chloroplast thylakoid membrane. In terms of biological role, seems to be required for the assembly of the photosystem I complex. The polypeptide is Photosystem I assembly protein Ycf4 (Amborella trichopoda).